The sequence spans 529 residues: tRNA-2-methylthio-N(6)-dimethylallyladenosine synthase 1 (529 aa).

Positions 1–21 are disordered; that stretch reads MTQDHIVTERPPATRNDTAGN. Residues 25–141 form the MTTase N-terminal domain; it reads RTYEVRTLGC…LPVLLERSRH (117 aa). [4Fe-4S] cluster is bound by residues Cys34, Cys70, Cys104, Cys178, Cys182, and Cys185. The Radical SAM core domain maps to 164–407; it reads RDSAYAAWVS…VALQERISLE (244 aa). The 71-residue stretch at 410–480 folds into the TRAM domain; sequence RSLVGTRQEL…PHHLIADGPL (71 aa). Residues 481 to 504 are disordered; the sequence is LQHRRTPAGDASERGQTPTTRGVG.

It belongs to the methylthiotransferase family. MiaB subfamily. In terms of assembly, monomer. [4Fe-4S] cluster is required as a cofactor.

It is found in the cytoplasm. It carries out the reaction N(6)-dimethylallyladenosine(37) in tRNA + (sulfur carrier)-SH + AH2 + 2 S-adenosyl-L-methionine = 2-methylsulfanyl-N(6)-dimethylallyladenosine(37) in tRNA + (sulfur carrier)-H + 5'-deoxyadenosine + L-methionine + A + S-adenosyl-L-homocysteine + 2 H(+). Its function is as follows. Catalyzes the methylthiolation of N6-(dimethylallyl)adenosine (i(6)A), leading to the formation of 2-methylthio-N6-(dimethylallyl)adenosine (ms(2)i(6)A) at position 37 in tRNAs that read codons beginning with uridine. The protein is tRNA-2-methylthio-N(6)-dimethylallyladenosine synthase 1 of Mycobacterium marinum (strain ATCC BAA-535 / M).